The chain runs to 501 residues: MAKVLVNGNIKSGDVLKEVIENEPHLENSNIAIIRGIKKETEKESKKYKITTTKGVMIVGITENNESVDFWNKNYSLLEGKNLRWKSPLDVAFGAITIDLDVVKEPYKFKKYDVALSISGFDKTEGHLIFIKKDATEAQGLRNPKIGELIGGKRILPKLTTEDKIISIEPIMESREKIDYLLTTDLNTKLEDDWKIFTYCEAELEGPSKAVEHVLAIMESGYIEASEHTNTYIADCRLQTLKMDEENLKDRDRGTITVRNIGEGIGKVFVYKENRTSSLSHTAVGKITKGMELLDFSEGGIITTISTPERLTVIGKTNEEAKKLFEKYGINHTMEGAPNDIIIEQTPKYTMDILKSKEVITKGIPENKIIKIEIYDEKAPVSAWYFRKMTGLTTQKVGSLPINFKHGDMVMFDKNEEYAKGLLPENIPNEETGCPEGVIAITNMAKRYKGYIGIRLSSNDKFGPTGESFEGTNIVGKVVENGEIIKKLRAKDRVYFLEVNQ.

This sequence belongs to the UPF0288 family.

This Methanococcus aeolicus (strain ATCC BAA-1280 / DSM 17508 / OCM 812 / Nankai-3) protein is UPF0288 protein Maeo_0995.